The sequence spans 657 residues: Threonine--tRNA ligase (657 aa).

Residues 1-62 (MALDITFPDG…AHSGQLQIMT (62 aa)) enclose the TGS domain. The catalytic stretch occupies residues 240–538 (DHRVIGRDLD…LTEIYKGAFP (299 aa)). Positions 334, 385, and 515 each coordinate Zn(2+).

It belongs to the class-II aminoacyl-tRNA synthetase family. In terms of assembly, homodimer. Zn(2+) is required as a cofactor.

It localises to the cytoplasm. The catalysed reaction is tRNA(Thr) + L-threonine + ATP = L-threonyl-tRNA(Thr) + AMP + diphosphate + H(+). Its function is as follows. Catalyzes the attachment of threonine to tRNA(Thr) in a two-step reaction: L-threonine is first activated by ATP to form Thr-AMP and then transferred to the acceptor end of tRNA(Thr). Also edits incorrectly charged L-seryl-tRNA(Thr). This Lacticaseibacillus paracasei (strain ATCC 334 / BCRC 17002 / CCUG 31169 / CIP 107868 / KCTC 3260 / NRRL B-441) (Lactobacillus paracasei) protein is Threonine--tRNA ligase.